Reading from the N-terminus, the 476-residue chain is Thymidine phosphorylase (476 aa).

Over residues 1–11 (MAAPGTPPPLA) the composition is skewed to pro residues. The interval 1–26 (MAAPGTPPPLAPETAGADSGGGSGEH) is disordered. Residues Thr6 and Thr475 each carry the phosphothreonine modification.

It belongs to the thymidine/pyrimidine-nucleoside phosphorylase family. In terms of assembly, homodimer.

It catalyses the reaction thymidine + phosphate = 2-deoxy-alpha-D-ribose 1-phosphate + thymine. It functions in the pathway pyrimidine metabolism; dTMP biosynthesis via salvage pathway; dTMP from thymine: step 1/2. Its function is as follows. Catalyzes the reversible phosphorolysis of thymidine. The produced molecules are then utilized as carbon and energy sources or in the rescue of pyrimidine bases for nucleotide synthesis. The polypeptide is Thymidine phosphorylase (Tymp) (Rattus norvegicus (Rat)).